A 49-amino-acid chain; its full sequence is Chitin-binding lectin (49 aa).

The Chitin-binding type-1 domain maps to 2 to 45; sequence DHRCGREATPPGKLCNDGRCCSQWGWCGTTQAYCSGKCQSQCDC. Intrachain disulfides connect Cys-5/Cys-22, Cys-16/Cys-28, Cys-21/Cys-35, and Cys-39/Cys-43.

As to quaternary structure, homodimer; disulfide-linked.

In terms of biological role, chitin-binding lectin which is specific for N-acetylglucosamine oligomers. The protein is Chitin-binding lectin of Viscum album (European mistletoe).